The following is a 396-amino-acid chain: 1-deoxy-D-xylulose 5-phosphate reductoisomerase (396 aa).

Residues T15, G16, S17, I18, G41, and N129 each coordinate NADPH. Residue K130 participates in 1-deoxy-D-xylulose 5-phosphate binding. E131 is an NADPH binding site. D155 lines the Mn(2+) pocket. 1-deoxy-D-xylulose 5-phosphate contacts are provided by S156, E157, S182, and H205. Residue E157 coordinates Mn(2+). G211 serves as a coordination point for NADPH. 1-deoxy-D-xylulose 5-phosphate contacts are provided by S218, N223, K224, and E227. Position 227 (E227) interacts with Mn(2+).

The protein belongs to the DXR family. The cofactor is Mg(2+). It depends on Mn(2+) as a cofactor.

The enzyme catalyses 2-C-methyl-D-erythritol 4-phosphate + NADP(+) = 1-deoxy-D-xylulose 5-phosphate + NADPH + H(+). The protein operates within isoprenoid biosynthesis; isopentenyl diphosphate biosynthesis via DXP pathway; isopentenyl diphosphate from 1-deoxy-D-xylulose 5-phosphate: step 1/6. Its function is as follows. Catalyzes the NADPH-dependent rearrangement and reduction of 1-deoxy-D-xylulose-5-phosphate (DXP) to 2-C-methyl-D-erythritol 4-phosphate (MEP). The sequence is that of 1-deoxy-D-xylulose 5-phosphate reductoisomerase from Xanthomonas campestris pv. campestris (strain B100).